A 1470-amino-acid chain; its full sequence is Actin cytoskeleton-regulatory complex protein pan1 (1470 aa).

Residues 1–157 (MYSSSNSFLG…PPPKSSGSKI (157 aa)) are disordered. Low complexity predominate over residues 25-48 (QPPYSQFPQGQQQIPQQTGFQPQP). Positions 54–75 (QSASHLQPQPTGFPTGQLQPQF) are enriched in polar residues. The segment covering 77 to 101 (GFPGAAPQQQQQQLGGYQAPAQQPQ) has biased composition (low complexity). A compositionally biased stretch (polar residues) spans 129–139 (RTSSEIANSFS). The 89-residue stretch at 169–257 (DQAKFEQLFK…DKIKNEVSSM (89 aa)) folds into the EH 1 domain. The region spanning 201–236 (LPGSELSKIWVLSDTTKSGQLFFPEFALAMYLCNLR) is the EF-hand 1 domain. Disordered regions lie at residues 282-305 (DAPL…QPSN) and 343-377 (QATG…GPRP). The segment covering 292–301 (PPAPQHPKPQ) has biased composition (pro residues). The span at 348-360 (PGQSQQQYLQPQP) shows a compositional bias: low complexity. The region spanning 458-547 (EKKIYDDLFR…PELIPPSTRN (90 aa)) is the EH 2 domain. Residues 491–526 (LDRKDLERIWTLADPNNRGRLNMDEFAVAMHLIYRK) enclose the EF-hand 2 domain. Disordered stretches follow at residues 614–641 (GYRS…SEEE), 794–864 (ELAG…HERR), 886–1087 (GSRT…LKEK), and 1099–1470 (EQVR…RVLD). Over residues 627–637 (ARPSSPAASQA) the composition is skewed to low complexity. Residues 633-758 (AASQASEEEL…LFRLKDAKAH (126 aa)) are a coiled coil. 2 stretches are compositionally biased toward basic and acidic residues: residues 809–864 (AAAR…HERR) and 892–910 (VRKE…HEEP). Low complexity predominate over residues 917–932 (LSPAPSAGSAGSLPGS). Composition is skewed to basic and acidic residues over residues 933 to 951 (THED…RIAE), 971 to 1006 (RQER…EEQR), 1052 to 1087 (AARE…LKEK), 1099 to 1127 (EQVR…EKEA), and 1134 to 1146 (AEIE…ERQL). Positions 963–1159 (DTSETLLQRQ…LEGLDEESSS (197 aa)) form a coiled coil. Positions 1151-1163 (EGLDEESSSDDEG) are enriched in acidic residues. Positions 1169–1180 (PEDSTPTQSQLL) are enriched in polar residues. Residues 1181-1195 (PTVTPAAPVSAPESE) are compositionally biased toward low complexity. Residues 1243–1269 (PNVTSPRADVHSTNPFHRLAQQESSKP) show a composition bias toward polar residues. Positions 1277 to 1286 (LERKSRARPE) are enriched in basic and acidic residues. Positions 1340 to 1352 (SKSSTPVQDSPVT) are enriched in polar residues. 2 stretches are compositionally biased toward pro residues: residues 1367–1380 (AAPP…PPAA) and 1389–1433 (APPP…PTPA). The WH2 domain maps to 1437-1454 (DRSALLASIQMGKGLRKV). The segment covering 1457–1470 (NDRSTSSSAGRVLD) has biased composition (polar residues).

It belongs to the PAN1 family. Component of the PAN1 actin cytoskeleton-regulatory complex.

The protein localises to the cell membrane. It localises to the endosome membrane. Its subcellular location is the cytoplasm. The protein resides in the cytoskeleton. It is found in the actin patch. Component of the PAN1 actin cytoskeleton-regulatory complex required for the internalization of endosomes during actin-coupled endocytosis. The complex links the site of endocytosis to the cell membrane-associated actin cytoskeleton. Mediates uptake of external molecules and vacuolar degradation of plasma membrane proteins. Plays a role in the proper organization of the cell membrane-associated actin cytoskeleton and promotes its destabilization. The sequence is that of Actin cytoskeleton-regulatory complex protein pan1 (pan1) from Neosartorya fischeri (strain ATCC 1020 / DSM 3700 / CBS 544.65 / FGSC A1164 / JCM 1740 / NRRL 181 / WB 181) (Aspergillus fischerianus).